An 860-amino-acid chain; its full sequence is Leucine--tRNA ligase (860 aa).

The short motif at 42 to 52 is the 'HIGH' region element; that stretch reads PYPSGRLHMGH. Residues 619–623 carry the 'KMSKS' region motif; it reads KMSKS. K622 is a binding site for ATP.

It belongs to the class-I aminoacyl-tRNA synthetase family.

The protein localises to the cytoplasm. The enzyme catalyses tRNA(Leu) + L-leucine + ATP = L-leucyl-tRNA(Leu) + AMP + diphosphate. This is Leucine--tRNA ligase from Escherichia coli (strain K12 / MC4100 / BW2952).